The chain runs to 329 residues: Quinolinate synthase (329 aa).

Iminosuccinate is bound by residues histidine 44 and serine 61. Position 106 (cysteine 106) interacts with [4Fe-4S] cluster. Residues 132–134 (YIN) and serine 149 contribute to the iminosuccinate site. Position 192 (cysteine 192) interacts with [4Fe-4S] cluster. Iminosuccinate is bound by residues 218-220 (HPE) and threonine 235. Cysteine 285 is a [4Fe-4S] cluster binding site.

The protein belongs to the quinolinate synthase family. Type 2 subfamily. [4Fe-4S] cluster is required as a cofactor.

It localises to the plastid. It is found in the cyanelle. The catalysed reaction is iminosuccinate + dihydroxyacetone phosphate = quinolinate + phosphate + 2 H2O + H(+). It functions in the pathway cofactor biosynthesis; NAD(+) biosynthesis; quinolinate from iminoaspartate: step 1/1. In terms of biological role, catalyzes the condensation of iminoaspartate with dihydroxyacetone phosphate to form quinolinate. The protein is Quinolinate synthase of Cyanophora paradoxa.